Reading from the N-terminus, the 358-residue chain is Acetylxylan esterase / glucomannan deacetylase (358 aa).

The first 18 residues, methionine 1–alanine 18, serve as a signal peptide directing secretion. Cysteine 19 carries N-palmitoyl cysteine lipidation. Cysteine 19 carries the S-diacylglycerol cysteine lipid modification. Serine 160 functions as the Nucleophile in the catalytic mechanism. Catalysis depends on charge relay system residues aspartate 333 and histidine 335.

Belongs to the carbohydrate esterase 2 (CE2) family.

Its subcellular location is the cell membrane. It carries out the reaction Deacetylation of xylans and xylo-oligosaccharides.. It participates in glycan degradation; xylan degradation. Functionally, involved in the degradation of plant cell wall polysaccharides. Catalyzes the deacetylation of acetylated birchwood xylan and glucomannan, with equal efficiency, and of the synthetic substrate 4-nitrophenyl acetate (4-NPAc). Does not bind cellulose, cellohexaose and beta-glucan. The polypeptide is Acetylxylan esterase / glucomannan deacetylase (Cellvibrio japonicus (strain Ueda107) (Pseudomonas fluorescens subsp. cellulosa)).